The following is a 370-amino-acid chain: Dual-specificity RNA methyltransferase RlmN (370 aa).

Catalysis depends on Glu-93, which acts as the Proton acceptor. In terms of domain architecture, Radical SAM core spans 99–337 (EEGRGTLCVS…VTTVRKTRGD (239 aa)). A disulfide bond links Cys-106 and Cys-343. [4Fe-4S] cluster is bound by residues Cys-113, Cys-117, and Cys-120. Residues 167 to 168 (GE), Ser-199, 221 to 223 (SLH), and Asn-300 contribute to the S-adenosyl-L-methionine site. Cys-343 acts as the S-methylcysteine intermediate in catalysis.

This sequence belongs to the radical SAM superfamily. RlmN family. It depends on [4Fe-4S] cluster as a cofactor.

It is found in the cytoplasm. It carries out the reaction adenosine(2503) in 23S rRNA + 2 reduced [2Fe-2S]-[ferredoxin] + 2 S-adenosyl-L-methionine = 2-methyladenosine(2503) in 23S rRNA + 5'-deoxyadenosine + L-methionine + 2 oxidized [2Fe-2S]-[ferredoxin] + S-adenosyl-L-homocysteine. The enzyme catalyses adenosine(37) in tRNA + 2 reduced [2Fe-2S]-[ferredoxin] + 2 S-adenosyl-L-methionine = 2-methyladenosine(37) in tRNA + 5'-deoxyadenosine + L-methionine + 2 oxidized [2Fe-2S]-[ferredoxin] + S-adenosyl-L-homocysteine. In terms of biological role, specifically methylates position 2 of adenine 2503 in 23S rRNA and position 2 of adenine 37 in tRNAs. m2A2503 modification seems to play a crucial role in the proofreading step occurring at the peptidyl transferase center and thus would serve to optimize ribosomal fidelity. The chain is Dual-specificity RNA methyltransferase RlmN from Francisella tularensis subsp. tularensis (strain WY96-3418).